The following is a 254-amino-acid chain: Tabinhibitin 6 (254 aa).

The N-terminal stretch at 1–22 is a signal peptide; the sequence is MLPYWCPLLLAALVLQYATIDA. Residues 31-33 carry the Cell attachment site motif; the sequence is RGD. The SCP domain occupies 66–210; sequence LSKINDVRDH…KARALLTCNF (145 aa).

This sequence belongs to the CRISP family. As to expression, expressed in salivary glands.

It localises to the secreted. Its function is as follows. Inhibits platelet aggregation induced by all agonists tested (ADP, arachidonic acid, the thromboxane A2 analog U46619, thrombin, and snake venom snaclecs (TMVA that activates platelet through GPIB, and stejnulxin that specifically acts through GPVI (GP6))). May act by competing with fibrinogen for binding to glycoprotein IIb/IIIa (ITGA2B/ITGB3). The chain is Tabinhibitin 6 from Tabanus yao (Horsefly).